The chain runs to 42 residues: uncharacterized protein (42 aa).

The chain crosses the membrane as a helical span at residues 15 to 35 (INVCLSFFFLFYFIFVLFFAA).

The protein resides in the membrane. This is an uncharacterized protein from Dictyostelium discoideum (Social amoeba).